A 208-amino-acid chain; its full sequence is Histone H1t (208 aa).

Over residues 1 to 12 (MSETAPAASSTL) the composition is skewed to polar residues. Residues 1 to 39 (MSETAPAASSTLVPAPVEKPSSKRRGKKPGLAPARKPRG) form a disordered region. Serine 9 is modified (phosphoserine). The H15 domain occupies 38–111 (RGFSVSKLIP…GASGSFKLSK (74 aa)). Residue arginine 56 is modified to Citrulline. Positions 95–208 (LVQTKGTGAS…TDLRKAAGRK (114 aa)) are disordered. A compositionally biased stretch (basic residues) spans 121 to 134 (KGKKSASAKAKKMG). A Phosphoserine modification is found at serine 141. Basic residues predominate over residues 143–154 (KSSKTKAVKKPK). Residue threonine 156 is modified to Phosphothreonine. 2 positions are modified to phosphoserine: serine 163 and serine 178. The span at 199–208 (TDLRKAAGRK) shows a compositional bias: basic and acidic residues.

It belongs to the histone H1/H5 family. Post-translationally, phosphorylated in early spermatids. Citrullination at Arg-56 (H1R54ci) by PADI4 takes place within the DNA-binding site of H1 and results in its displacement from chromatin and global chromatin decondensation, thereby promoting pluripotency and stem cell maintenance. In terms of tissue distribution, testis-specific.

Its subcellular location is the nucleus. It is found in the chromosome. Functionally, testis-specific histone H1 that forms less compacted chromatin compared to other H1 histone subtypes. Formation of more relaxed chromatin may be required to promote chromatin architecture required for proper chromosome regulation during meiosis, such as homologous recombination. Histones H1 act as linkers that bind to nucleosomes and compact polynucleosomes into a higher-order chromatin configuration. In Mus musculus (Mouse), this protein is Histone H1t.